A 307-amino-acid chain; its full sequence is ATP synthase gamma chain (307 aa).

The protein belongs to the ATPase gamma chain family. In terms of assembly, F-type ATPases have 2 components, CF(1) - the catalytic core - and CF(0) - the membrane proton channel. CF(1) has five subunits: alpha(3), beta(3), gamma(1), delta(1), epsilon(1). CF(0) has three main subunits: a, b and c.

Its subcellular location is the cell membrane. Functionally, produces ATP from ADP in the presence of a proton gradient across the membrane. The gamma chain is believed to be important in regulating ATPase activity and the flow of protons through the CF(0) complex. In Bifidobacterium longum (strain DJO10A), this protein is ATP synthase gamma chain.